We begin with the raw amino-acid sequence, 323 residues long: NAC transcription factor 25 (323 aa).

Residues 16–177 (LPPGFRFHPT…DWVLCRIYKK (162 aa)) form the NAC domain. Residues 114-183 (VGVKKALVFY…IYKKNSSQRP (70 aa)) mediate DNA binding. Low complexity predominate over residues 201 to 221 (KSSANSSSTSVLDNNDNNNNN). The tract at residues 201–223 (KSSANSSSTSVLDNNDNNNNNNE) is disordered.

Expressed specifically in the tapetum.

It is found in the nucleus. In terms of biological role, transcription factor of the NAC family. May be associated with anther development and pollen production. Required for normal seed development and morphology. The sequence is that of NAC transcription factor 25 (NAC025) from Arabidopsis thaliana (Mouse-ear cress).